The primary structure comprises 232 residues: Mitochondrial import inner membrane translocase subunit Tim21 (232 aa).

The N-terminal 31 residues, 1-31, are a transit peptide targeting the mitochondrion; sequence MLPRFLWRPVLCSYRALGSPSRSLTVSYRNL. Residues 96–116 form a helical membrane-spanning segment; that stretch reads FTYFIVVLIGIGVTGGLFYVV.

This sequence belongs to the TIM21 family.

Its subcellular location is the mitochondrion membrane. Functionally, may participate in the translocation of transit peptide-containing proteins across the mitochondrial inner membrane. The sequence is that of Mitochondrial import inner membrane translocase subunit Tim21 (timm21) from Xenopus laevis (African clawed frog).